A 399-amino-acid chain; its full sequence is Succinate--CoA ligase [ADP-forming] subunit beta (399 aa).

Positions 9-254 (KAVLKSFGAP…TTEEDEKEIE (246 aa)) constitute an ATP-grasp domain. ATP is bound by residues lysine 46, 53-55 (GRG), glutamate 109, alanine 112, and glutamate 117. Mg(2+) contacts are provided by asparagine 209 and aspartate 223. Substrate is bound by residues asparagine 274 and 331–333 (GIM).

This sequence belongs to the succinate/malate CoA ligase beta subunit family. Heterotetramer of two alpha and two beta subunits. Mg(2+) is required as a cofactor.

It catalyses the reaction succinate + ATP + CoA = succinyl-CoA + ADP + phosphate. It carries out the reaction GTP + succinate + CoA = succinyl-CoA + GDP + phosphate. It participates in carbohydrate metabolism; tricarboxylic acid cycle; succinate from succinyl-CoA (ligase route): step 1/1. Succinyl-CoA synthetase functions in the citric acid cycle (TCA), coupling the hydrolysis of succinyl-CoA to the synthesis of either ATP or GTP and thus represents the only step of substrate-level phosphorylation in the TCA. The beta subunit provides nucleotide specificity of the enzyme and binds the substrate succinate, while the binding sites for coenzyme A and phosphate are found in the alpha subunit. The sequence is that of Succinate--CoA ligase [ADP-forming] subunit beta from Maricaulis maris (strain MCS10) (Caulobacter maris).